Here is a 78-residue protein sequence, read N- to C-terminus: Large ribosomal subunit protein bL28 (78 aa).

It belongs to the bacterial ribosomal protein bL28 family.

In Psychrobacter arcticus (strain DSM 17307 / VKM B-2377 / 273-4), this protein is Large ribosomal subunit protein bL28.